Consider the following 769-residue polypeptide: Dolichyl-phosphate-mannose--protein mannosyltransferase 2 (769 aa).

Residues 1 to 44 (MSTSVEPNETEALLRKQNDLSTTASIEEKYPHQQGEAAEDDDDT) form a disordered region. A glycan (N-linked (GlcNAc...) asparagine) is linked at Asn8. The chain crosses the membrane as a helical span at residues 59-79 (SLKQVESILAPIVFTALSFFV). The N-linked (GlcNAc...) asparagine glycan is linked to Asn132. 3 helical membrane-spanning segments follow: residues 152-169 (MRLFNATFSALCVPLAYF), 176-194 (FSMFTTWLFTLMVALESSY), and 200-218 (FILLDSMLLFFTVATVFCF). The N-linked (GlcNAc...) asparagine glycan is linked to Asn226. A run of 2 helical transmembrane segments spans residues 252–272 (VKMVGLFVTTLVGIYTVVDLW) and 288–308 (HWFARIVALILVPIFIFMLSF). A glycan (N-linked (GlcNAc...) asparagine) is linked at Asn324. The region spanning 342–397 (PREVSMFHSVITLKNQGLSGGLLHSHVQTFPEGSKQQQVTTYGHKDSNNNWIFQRA) is the MIR 1 domain. N-linked (GlcNAc...) asparagine glycosylation is found at Asn408, Asn453, and Asn462. 2 MIR domains span residues 412-468 (IEYI…VEIM) and 474-534 (EDKM…IENN). 4 consecutive transmembrane segments (helical) span residues 615-635 (TTWTSTVGVILFAFIVLYYLI), 655-675 (FLMGGIYPMFGWGLHFLPFAI), 679-699 (VTYVHHYVPALYFAMLVFCYE), and 718-738 (LLYLAIYIGLLSLVAGTFWYF).

The protein belongs to the glycosyltransferase 39 family. As to quaternary structure, PMT1 and PMT2 form a functional heterodimer.

The protein resides in the endoplasmic reticulum membrane. The catalysed reaction is a di-trans,poly-cis-dolichyl beta-D-mannosyl phosphate + L-seryl-[protein] = 3-O-(alpha-D-mannosyl)-L-seryl-[protein] + a di-trans,poly-cis-dolichyl phosphate + H(+). It carries out the reaction a di-trans,poly-cis-dolichyl beta-D-mannosyl phosphate + L-threonyl-[protein] = 3-O-(alpha-D-mannosyl)-L-threonyl-[protein] + a di-trans,poly-cis-dolichyl phosphate + H(+). Its pathway is protein modification; protein glycosylation. Protein mannosyltransferase (PMT) involved in hyphal growth and drug sensitivity. Transfers mannose from Dol-P-mannose to Ser or Thr residues on proteins. PMT1, PMT2 and PMT4 account for most of the protein-O-glycosylation activity, while PMT5 and PMT6 may specifically modulate a much narrower spectrum of target proteins. Essential protein that plays an important role in virulence. This chain is Dolichyl-phosphate-mannose--protein mannosyltransferase 2, found in Candida albicans (strain SC5314 / ATCC MYA-2876) (Yeast).